The primary structure comprises 212 residues: Redox-sensing transcriptional repressor Rex (212 aa).

The H-T-H motif DNA-binding region spans 17-56 (KYHRYLQELMENDVDRISSKELSEKIGFTASQIRQDLNCF). Residue 91 to 96 (GAGNIG) coordinates NAD(+).

The protein belongs to the transcriptional regulatory Rex family. Homodimer.

Its subcellular location is the cytoplasm. Its function is as follows. Modulates transcription in response to changes in cellular NADH/NAD(+) redox state. The sequence is that of Redox-sensing transcriptional repressor Rex from Clostridium perfringens (strain ATCC 13124 / DSM 756 / JCM 1290 / NCIMB 6125 / NCTC 8237 / Type A).